The following is a 452-amino-acid chain: Probable hexaprenyl pyrophosphate synthase, mitochondrial (452 aa).

Isopentenyl diphosphate contacts are provided by Lys-108, Arg-111, and His-204. Mg(2+) contacts are provided by Asp-211 and Asp-215. Arg-220 serves as a coordination point for an all-trans-polyprenyl diphosphate. Arg-221 contributes to the isopentenyl diphosphate binding site. 4 residues coordinate an all-trans-polyprenyl diphosphate: Lys-303, Thr-304, Gln-341, and Lys-358.

It belongs to the FPP/GGPP synthase family. The cofactor is Mg(2+).

It is found in the mitochondrion. The protein operates within cofactor biosynthesis; ubiquinone biosynthesis. Functionally, assembly of polyisoprenoid side chains. The polyprenyl synthase of coenzyme Q biosynthesis catalyzes the formation from isopentenyl diphosphate of all trans-polyprenyl pyrophosphates generally ranging in length of between 6 and 10 isoprene units depending on the species. The sequence is that of Probable hexaprenyl pyrophosphate synthase, mitochondrial (COQ1) from Yarrowia lipolytica (strain CLIB 122 / E 150) (Yeast).